The sequence spans 160 residues: Small ribosomal subunit protein bS6 (160 aa).

Residues Arg96 to Gln160 form a disordered region. Over residues Thr126–Glu145 the composition is skewed to low complexity. Basic residues predominate over residues Pro151–Gln160.

It belongs to the bacterial ribosomal protein bS6 family.

In terms of biological role, binds together with bS18 to 16S ribosomal RNA. The sequence is that of Small ribosomal subunit protein bS6 from Metamycoplasma arthritidis (strain 158L3-1) (Mycoplasma arthritidis).